The following is a 290-amino-acid chain: tRNA(Ile)-lysidine synthase (290 aa).

ATP is bound at residue 12-17 (SGGSDS).

It belongs to the tRNA(Ile)-lysidine synthase family.

It is found in the cytoplasm. It catalyses the reaction cytidine(34) in tRNA(Ile2) + L-lysine + ATP = lysidine(34) in tRNA(Ile2) + AMP + diphosphate + H(+). Ligates lysine onto the cytidine present at position 34 of the AUA codon-specific tRNA(Ile) that contains the anticodon CAU, in an ATP-dependent manner. Cytidine is converted to lysidine, thus changing the amino acid specificity of the tRNA from methionine to isoleucine. The chain is tRNA(Ile)-lysidine synthase from Mycoplasma genitalium (strain ATCC 33530 / DSM 19775 / NCTC 10195 / G37) (Mycoplasmoides genitalium).